The chain runs to 468 residues: ATP synthase subunit beta (468 aa).

An ATP-binding site is contributed by 148–155 (GGAGVGKT).

This sequence belongs to the ATPase alpha/beta chains family. F-type ATPases have 2 components, CF(1) - the catalytic core - and CF(0) - the membrane proton channel. CF(1) has five subunits: alpha(3), beta(3), gamma(1), delta(1), epsilon(1). CF(0) has three main subunits: a(1), b(2) and c(9-12). The alpha and beta chains form an alternating ring which encloses part of the gamma chain. CF(1) is attached to CF(0) by a central stalk formed by the gamma and epsilon chains, while a peripheral stalk is formed by the delta and b chains.

It localises to the cell inner membrane. It catalyses the reaction ATP + H2O + 4 H(+)(in) = ADP + phosphate + 5 H(+)(out). In terms of biological role, produces ATP from ADP in the presence of a proton gradient across the membrane. The catalytic sites are hosted primarily by the beta subunits. This chain is ATP synthase subunit beta, found in Xanthomonas campestris pv. campestris (strain 8004).